The chain runs to 250 residues: Membrane-spanning 4-domains subfamily A member 8 (250 aa).

At 1–74 the chain is on the cytoplasmic side; the sequence is MNSMTSAVPV…ALKEGKTLGA (74 aa). A helical transmembrane segment spans residues 75 to 95; sequence IQIIIGLAHIGLGSIMATVLV. Residues 96-98 lie on the Extracellular side of the membrane; it reads GEY. A helical transmembrane segment spans residues 99-119; that stretch reads LSISFYGGFPFWGGLWFIISG. The Cytoplasmic segment spans residues 120–136; sequence SLSVAAENQPYSYCLLS. Residues 137-157 form a helical membrane-spanning segment; the sequence is GSLGLNIVSAICSAVGVILFI. At 158-180 the chain is on the extracellular side; that stretch reads TDLSIPHPYAYPDYYPYAWGVNP. A helical transmembrane segment spans residues 181–201; the sequence is GMAISGVLLVFCLLEFGIACA. Residues 202 to 250 lie on the Cytoplasmic side of the membrane; the sequence is SSHFGCQLVCCQSSNVSVIYPNIYAANPVITPEPVTSPPSYSSEIQANK.

It belongs to the MS4A family. In terms of tissue distribution, expressed by hematopoietic tissues and cells lines.

The protein resides in the membrane. Its function is as follows. May be involved in signal transduction as a component of a multimeric receptor complex. This is Membrane-spanning 4-domains subfamily A member 8 (MS4A8) from Homo sapiens (Human).